The chain runs to 702 residues: Methionine--tRNA ligase (702 aa).

The short motif at 14–24 (PYANGPVHLGH) is the 'HIGH' region element. Positions 146, 149, 159, and 162 each coordinate Zn(2+). The 'KMSKS' region motif lies at 344–348 (KFSKS). Lys347 contacts ATP. The tRNA-binding domain maps to 601-702 (EFLKVDLRVA…GKEINGKKIQ (102 aa)).

This sequence belongs to the class-I aminoacyl-tRNA synthetase family. MetG type 1 subfamily. As to quaternary structure, homodimer. Zn(2+) serves as cofactor.

The protein localises to the cytoplasm. The enzyme catalyses tRNA(Met) + L-methionine + ATP = L-methionyl-tRNA(Met) + AMP + diphosphate. Is required not only for elongation of protein synthesis but also for the initiation of all mRNA translation through initiator tRNA(fMet) aminoacylation. This chain is Methionine--tRNA ligase, found in Chlorobium phaeobacteroides (strain DSM 266 / SMG 266 / 2430).